The chain runs to 199 residues: Homeobox protein ceh-19 (199 aa).

Residues 1–42 are disordered; that stretch reads MAFNIESLLEKKSNPVEEGNDFEEENDSEKNGEEDEEEEEKN. The span at 18–40 shows a compositional bias: acidic residues; it reads EGNDFEEENDSEKNGEEDEEEEE. The homeobox DNA-binding region spans 94–153; it reads ERKPRQAYSARQLDRLETEFQTDKYLSVNKRIQLSQTLNLTETQIKTWFQNRRTKWKKQL.

It is found in the nucleus. In terms of biological role, probable transcription factor. Required for MC motor neuron differentiation and function, including role in modulating pharyngeal pumping. Regulates gene expression of FMRFamide-like neuropeptide flp-2 in MC motor neurons. May act downstream of transcription factor pha-4. The protein is Homeobox protein ceh-19 (ceh-19) of Caenorhabditis elegans.